The sequence spans 314 residues: MTKNPKISLIGSGNIGGTLAHLISLKKLGDIVLFDVAEGVPQGKALDIMQAATIAGADIKIKGTNNYKDIEGSDAVIITAGLPRKPGMSRDDLISVNTKIMQDVAQNIKKYARNAFVIVITNPLDIMVYVMLKESGLPHNKVIGMAGVLDSSRFNLFLAEEFKVSVRNVNSIVLGGHGDAMVPLVRYSTISGVPIPDLIKMGLSSNKNIEKIIDRTRNGGGEIVALLKTGSAYYAPAASAIAMLESYLKDKRQILTCAAYLQGEYDVHDLYIGVPIIIGKEGVIKVIELQLTEEEKILFDKSVVGVKKLIDAIQ.

Residues 11-16 (GSGNIG) and Asp35 each bind NAD(+). Substrate contacts are provided by Arg84 and Arg90. NAD(+) contacts are provided by residues Asn97 and 120–122 (ITN). Residues Asn122 and Arg153 each coordinate substrate. His177 functions as the Proton acceptor in the catalytic mechanism.

Belongs to the LDH/MDH superfamily. MDH type 3 family.

The catalysed reaction is (S)-malate + NAD(+) = oxaloacetate + NADH + H(+). Its function is as follows. Catalyzes the reversible oxidation of malate to oxaloacetate. In Rickettsia typhi (strain ATCC VR-144 / Wilmington), this protein is Malate dehydrogenase.